The chain runs to 722 residues: Bifunctional UDP-N-acetylglucosamine 2-epimerase/N-acetylmannosamine kinase (722 aa).

Arg-19, Ser-23, Arg-113, His-220, and Asn-253 together coordinate UDP. The CMP-N-acetyl-beta-neuraminate site is built by Lys-259, Glu-271, Lys-280, and His-281. 5 residues coordinate UDP: Val-282, Ser-301, Ser-302, Glu-307, and Arg-321. Residues 406-722 (TLSALAVDLG…VLDYTTRRIY (317 aa)) are N-acetylmannosamine kinase. Asp-413 provides a ligand contact to Mg(2+). An N-acyl-D-mannosamine 6-phosphate is bound at residue Gly-416. ADP contacts are provided by Thr-417, Asn-418, and Arg-420. Positions 476, 477, 489, 516, 517, and 545 each coordinate an N-acyl-D-mannosamine 6-phosphate. Gly-476, Arg-477, Thr-489, Asn-516, and Asp-517 together coordinate an N-acyl-D-mannosamine. Residue Asp-517 is part of the active site. An N-acyl-D-mannosamine is bound by residues Glu-566 and His-569. His-569 serves as a coordination point for an N-acyl-D-mannosamine 6-phosphate. Residues His-569, Cys-579, Cys-581, and Cys-586 each coordinate Zn(2+). Residue Glu-588 participates in an N-acyl-D-mannosamine 6-phosphate binding. Residue Glu-588 coordinates an N-acyl-D-mannosamine.

The protein in the N-terminal section; belongs to the UDP-N-acetylglucosamine 2-epimerase family. This sequence in the C-terminal section; belongs to the ROK (NagC/XylR) family. In terms of assembly, homodimer. Homotetramer. Homohexamer. The hexameric form exhibits both enzyme activities, whereas the dimeric form only catalyzes the phosphorylation of N-acyl-D-mannosamine. Post-translationally, phosphorylated. Phosphorylation by PKC activates the UDP-N-acetylglucosamine 2-epimerase activity. In terms of tissue distribution, highest expression in liver and placenta. Also found in heart, brain, lung, kidney, skeletal muscle and pancreas. Isoform 1 is expressed in heart, brain, kidney, liver, placenta, lung, spleen, pancreas, skeletal muscle and colon. Isoform 2 is expressed mainly in placenta, but also in brain, kidney, liver, lung, pancreas and colon. Isoform 3 is expressed at low level in kidney, liver, placenta and colon.

It localises to the cytoplasm. The protein resides in the cytosol. It catalyses the reaction UDP-N-acetyl-alpha-D-glucosamine + H2O = aldehydo-N-acetyl-D-mannosamine + UDP + H(+). The catalysed reaction is an N-acyl-D-mannosamine + ATP = an N-acyl-D-mannosamine 6-phosphate + ADP + H(+). It participates in amino-sugar metabolism; N-acetylneuraminate biosynthesis. Its activity is regulated as follows. The UDP-N-acetylglucosamine 2-epimerase activity, in contrast to the N-acetylmannosamine kinase activity, exhibits allosteric regulation by cytidine monophosphate-N-acetylneuraminic acid (CMP-Neu5Ac), the end product of neuraminic acid biosynthesis. Moreover, the activity is contingent upon the oligomeric state of the enzyme. The monomeric form is inactive, while the dimeric form selectively catalyzes the phosphorylation of N-acetylmannosamine. The hexameric form, on the other hand, demonstrates full proficiency in both enzyme activities. Furthermore, the UDP-N-acetylglucosamine 2-epimerase activity is increased by PKC-mediated phosphorylation. In terms of biological role, bifunctional enzyme that possesses both UDP-N-acetylglucosamine 2-epimerase and N-acetylmannosamine kinase activities, and serves as the initiator of the biosynthetic pathway leading to the production of N-acetylneuraminic acid (NeuAc), a critical precursor in the synthesis of sialic acids. By catalyzing this pivotal and rate-limiting step in sialic acid biosynthesis, this enzyme assumes a pivotal role in governing the regulation of cell surface sialylation, playing a role in embryonic angiogenesis. Sialic acids represent a category of negatively charged sugars that reside on the surface of cells as terminal components of glycoconjugates and mediate important functions in various cellular processes, including cell adhesion, signal transduction, and cellular recognition. This chain is Bifunctional UDP-N-acetylglucosamine 2-epimerase/N-acetylmannosamine kinase, found in Homo sapiens (Human).